A 202-amino-acid polypeptide reads, in one-letter code: Large ribosomal subunit protein bL25 (202 aa).

It belongs to the bacterial ribosomal protein bL25 family. CTC subfamily. In terms of assembly, part of the 50S ribosomal subunit; part of the 5S rRNA/L5/L18/L25 subcomplex. Contacts the 5S rRNA. Binds to the 5S rRNA independently of L5 and L18.

Functionally, this is one of the proteins that binds to the 5S RNA in the ribosome where it forms part of the central protuberance. This is Large ribosomal subunit protein bL25 from Rickettsia bellii (strain OSU 85-389).